The following is a 273-amino-acid chain: Putative esterase/lipase 3 (273 aa).

His-34 is an active-site residue. Ser-100 acts as the Charge relay system in catalysis.

It belongs to the lipase/esterase LIP3/BchO family.

The protein is Putative esterase/lipase 3 of Mycoplasma genitalium (strain ATCC 33530 / DSM 19775 / NCTC 10195 / G37) (Mycoplasmoides genitalium).